The primary structure comprises 249 residues: Putative [LysW]-aminoadipate/[LysW]-glutamate kinase (249 aa).

Residues Arg-64 and Asn-166 each contribute to the substrate site.

It belongs to the acetylglutamate kinase family. LysZ subfamily.

The protein localises to the cytoplasm. The enzyme catalyses [amino-group carrier protein]-C-terminal-N-(1,4-dicarboxybutan-1-yl)-L-glutamine + ATP = [amino-group carrier protein]-C-terminal-N-(1-carboxy-5-phosphooxy-5-oxopentan-1-yl)-L-glutamine + ADP. It carries out the reaction [amino-group carrier protein]-C-terminal-gamma-(L-glutamyl)-L-glutamate + ATP = [amino-group carrier protein]-C-terminal-gamma-(5-phospho-L-glutamyl)-L-glutamate + ADP. Its pathway is amino-acid biosynthesis; L-lysine biosynthesis via AAA pathway; L-lysine from L-alpha-aminoadipate (Thermus route): step 2/5. It participates in amino-acid biosynthesis; L-arginine biosynthesis. Involved in both the arginine and lysine biosynthetic pathways. Phosphorylates the LysW-bound precursors glutamate (for arginine biosynthesis), respectively alpha-aminoadipate (for lysine biosynthesis). In Pyrococcus horikoshii (strain ATCC 700860 / DSM 12428 / JCM 9974 / NBRC 100139 / OT-3), this protein is Putative [LysW]-aminoadipate/[LysW]-glutamate kinase.